The chain runs to 338 residues: Acyl-CoA:acyl-CoA alkyltransferase (338 aa).

Mn(2+)-binding residues include H18 and D56. The active-site Proton acceptor is the E97. Catalysis depends on C123, which acts as the Acyl-thioester intermediate.

The protein belongs to the thiolase-like superfamily. OleA family. As to quaternary structure, homodimer. Weakly associates with the OleBCD complex.

Its subcellular location is the cytoplasm. It catalyses the reaction a 1,2-saturated acyl-CoA + an acyl-CoA + H2O = an (R)-2-alkyl-3-oxoalkanoate + 2 CoA + H(+). Its activity is regulated as follows. Inhibited by cerulenin. In terms of biological role, involved in olefin biosynthesis. Catalyzes a non-decarboxylative head-to-head Claisen condensation of two acyl-CoA molecules, generating an (R)-2-alkyl-3-oxoalkanoate. Is active with fatty acyl-CoA substrates that ranged from C(8) to C(16) in length, and is the most active with palmitoyl-CoA and myristoyl-CoA. The polypeptide is Acyl-CoA:acyl-CoA alkyltransferase (Xanthomonas campestris pv. campestris (strain ATCC 33913 / DSM 3586 / NCPPB 528 / LMG 568 / P 25)).